We begin with the raw amino-acid sequence, 275 residues long: Bis(5'-nucleosyl)-tetraphosphatase, symmetrical (275 aa).

The protein belongs to the Ap4A hydrolase family.

It carries out the reaction P(1),P(4)-bis(5'-adenosyl) tetraphosphate + H2O = 2 ADP + 2 H(+). Its function is as follows. Hydrolyzes diadenosine 5',5'''-P1,P4-tetraphosphate to yield ADP. The sequence is that of Bis(5'-nucleosyl)-tetraphosphatase, symmetrical from Actinobacillus succinogenes (strain ATCC 55618 / DSM 22257 / CCUG 43843 / 130Z).